The following is a 163-amino-acid chain: Cytochrome c-type biogenesis protein CcmE (163 aa).

At 1-8 (MNPRRKKR) the chain is on the cytoplasmic side. Residues 9–29 (LTLAVALIVGVAGAASLLLYA) traverse the membrane as a helical; Signal-anchor for type II membrane protein segment. Residues 30–163 (LNSNLNLFYT…QEGVEKTAQY (134 aa)) are Periplasmic-facing. His131 and Tyr135 together coordinate heme.

It belongs to the CcmE/CycJ family.

Its subcellular location is the cell inner membrane. Functionally, heme chaperone required for the biogenesis of c-type cytochromes. Transiently binds heme delivered by CcmC and transfers the heme to apo-cytochromes in a process facilitated by CcmF and CcmH. The chain is Cytochrome c-type biogenesis protein CcmE from Shewanella denitrificans (strain OS217 / ATCC BAA-1090 / DSM 15013).